The primary structure comprises 516 residues: MKKIKLLLVAGACVVLSACSPQAPTVHTTDKGTQWEWNEGTIVVKSPERPAGQKSVIGLTAPKMEVVRVGFVGLGMRGPGAVSRFTHIPGTQIVALCDYDPKRAEACQNILKKASMPKAAIYSGETGYEELCKRDDIDLVYIAADWLHHFPIAKCALENGKHVAIEVPSAMNLQECWDLVNLSETTRKHCFILENCCYDWFEMNTLNMAQNGVFGEVIRAQGAYIHNLSDFWDYYWKNGENDKLGWRLEFNMRHRGDVYATHGLGPVAQVLDIHRGDRMKTLTAMDTKSVVGKGLVEAKTGSECTNFRNGDHTTTMIRTENGKVIEIQHNVMTPQPYNRLYQLTGVKGFANKYPTEGYALGADQLSASGVQPKVDNLSSHGFLPQAEMDALVEKYQHPILKKYGEIAKEVGGHGGMDFIMDSRLVYCLQNGLPLDMDVYDLAEWCALAELGEISMDNNCAAVEFPDFTRGEWNVVKGYKHAYASPEEEQASMEKAKAFTAKLKERGAKEWATEADK.

The first 18 residues, Met1 to Ala18, serve as a signal peptide directing secretion. Cys19 carries the N-palmitoyl cysteine lipid modification. Cys19 carries the S-diacylglycerol cysteine lipid modification. Residues Met76–Arg77, Asp98, Trp146–His149, Glu166–Val167, and Asn195 contribute to the NAD(+) site. Substrate contacts are provided by residues Tyr224, Arg247, Tyr259–His262, and Tyr337. NAD(+) is bound at residue Tyr259.

It belongs to the Gfo/Idh/MocA family. Glycosyl hydrolase 109 subfamily. It depends on NAD(+) as a cofactor.

The protein resides in the cell membrane. Its function is as follows. Glycosidase. The protein is Glycosyl hydrolase family 109 protein 4 of Phocaeicola vulgatus (strain ATCC 8482 / DSM 1447 / JCM 5826 / CCUG 4940 / NBRC 14291 / NCTC 11154) (Bacteroides vulgatus).